The sequence spans 532 residues: Phosphoenolpyruvate carboxykinase (ATP) (532 aa).

R60, Y200, and K206 together coordinate substrate. ATP contacts are provided by residues K206, H225, and 242-250 (GLSGTGKTT). Mn(2+) contacts are provided by K206 and H225. S244 contacts substrate. D263 provides a ligand contact to Mn(2+). ATP is bound by residues E291, R327, 443–444 (RI), and T449. R327 is a binding site for substrate.

Belongs to the phosphoenolpyruvate carboxykinase (ATP) family. Monomer. Requires Mn(2+) as cofactor.

The protein localises to the cytoplasm. The catalysed reaction is oxaloacetate + ATP = phosphoenolpyruvate + ADP + CO2. It participates in carbohydrate biosynthesis; gluconeogenesis. With respect to regulation, inhibited by p-chloromercuribenzoate. In terms of biological role, involved in gluconeogenesis. Catalyzes the conversion of oxaloacetate (OAA) to phosphoenolpyruvate (PEP) through direct phosphoryl transfer between the nucleoside triphosphate and OAA. In Anaerobiospirillum succiniciproducens, this protein is Phosphoenolpyruvate carboxykinase (ATP).